Consider the following 113-residue polypeptide: MHEMSLCEGIRGIVEDQARRHGFATVKVLRLEIGRFAGVEKAALGFAFDVVMRGSAAEGARLEILELPGRALCYDCGEEAAIQDRFDPCPLCGGGRLMPVGGDEMRIKDMEVQ.

H2 is a Ni(2+) binding site. Residues C73, C76, C89, and C92 each contribute to the Zn(2+) site.

The protein belongs to the HypA/HybF family.

Functionally, involved in the maturation of [NiFe] hydrogenases. Required for nickel insertion into the metal center of the hydrogenase. In Cereibacter sphaeroides (Rhodobacter sphaeroides), this protein is Hydrogenase maturation factor HypA.